A 504-amino-acid chain; its full sequence is FAD-dependent monooxygenase nsrK (504 aa).

Residue R146 participates in FAD binding. R227 is an active-site residue. The FAD site is built by D340 and G353.

It belongs to the paxM FAD-dependent monooxygenase family. FAD is required as a cofactor.

It participates in secondary metabolite biosynthesis. In terms of biological role, FAD-dependent monooxygenase; part of the gene cluster that mediates the biosynthesis of the tetrahydroxanthone dimer neosartorin, which exhibits antibacterial activity. The two different monomeric units appear to be synthesized by the same set of enzymes, among which the Baeyer-Villiger monooxygenase nsrF is the key enzyme for the divergence of the biosynthetic routes. The pathway begins with the synthesis of atrochrysone thioester by the polyketide synthase nsrB. The atrochrysone carboxyl ACP thioesterase nsrC then breaks the thioester bond and releases the atrochrysone carboxylic acid from AacuL. Atrochrysone carboxylic acid is decarboxylated by the decarboxylase nsrE, and oxidized by the anthrone oxygenase nsrD to yield emodin. Emodin is then reduced to emodin hydroquinone by the oxidoreductase nsrR. A-ring reduction by the short chain dehydrogenase nsrJ, dehydration by the scytalone dehydratase-like protein nsrI and probable spontaneous re-oxidation, results in overall deoxygenation to chrysophanol. The Baeyer-Villiger monooxygenase nsrF accepts chrysophanol as a substrate to insert one oxygen atom at two different positions to yield the precursors of both monomric units. NsrF is promiscuous/flexible in interacting with the 2 (non methylated and methylated) aromatic rings of chrysophanol, thus diverging the biosynthetic pathway at this point. After the hydrolysis of the lactones, methylesterification by the methyltransferase nsrG yields respectively moniliphenone and 2,2',6'-trihydroxy-4-methyl-6-methoxya-cyldiphenylmethanone. The next steps are the hydroxylation by the FAD-dependent monooxygenase nsrK, followed by isomerization by the monooxygenase nsrQ. The short chain dehydrogenase/reductase nsrO then catalyzes the C-5 ketoreduction to give the xanthone skeleton of blennolide C and 5-acetylblennolide A. The acetyltransferase nsrL has a strict substrate specificity and uses only blennolide A but not blennolide C to yield 5-acetylblennolide A as the single-acetylated product. In the final step of the biosynthesis, the heterodimerization of the 2 xanthones, blennolide C and 5-acetylblennolide A, is catalyzed by the cytochrome P450 monooxygenase nsrP. NsrP can utilize at least three different xanthones as its substrates to perform the dimerization reaction. This is FAD-dependent monooxygenase nsrK from Aspergillus novofumigatus (strain IBT 16806).